The sequence spans 408 residues: Branched-chain amino acid aminotransferase 2, chloroplastic (408 aa).

The transit peptide at 1–58 (MDCAAALLPGFHPNYLLCPSRHFSSLLPKTDLSSPLKFQLQNKQLSLASSHGFSPVIC) directs the protein to the chloroplast. Arginine 152 is a binding site for pyridoxal 5'-phosphate. Lysine 254 functions as the Proton acceptor in the catalytic mechanism. At lysine 254 the chain carries N6-(pyridoxal phosphate)lysine. Glutamate 290 contributes to the pyridoxal 5'-phosphate binding site.

Belongs to the class-IV pyridoxal-phosphate-dependent aminotransferase family. Requires pyridoxal 5'-phosphate as cofactor. Expressed in lupulin glands and leaves.

The protein localises to the plastid. It is found in the chloroplast. The enzyme catalyses L-isoleucine + 2-oxoglutarate = (S)-3-methyl-2-oxopentanoate + L-glutamate. It catalyses the reaction L-leucine + 2-oxoglutarate = 4-methyl-2-oxopentanoate + L-glutamate. It carries out the reaction L-valine + 2-oxoglutarate = 3-methyl-2-oxobutanoate + L-glutamate. It participates in amino-acid biosynthesis; L-isoleucine biosynthesis; L-isoleucine from 2-oxobutanoate: step 4/4. Its pathway is amino-acid biosynthesis; L-leucine biosynthesis; L-leucine from 3-methyl-2-oxobutanoate: step 4/4. It functions in the pathway amino-acid biosynthesis; L-valine biosynthesis; L-valine from pyruvate: step 4/4. Functionally, converts 2-oxo acids to branched-chain amino acids. Shows no kinetic preferences corresponding to anabolic or catabolic functions, but likely involved in BCAA biosynthesis. This Humulus lupulus (European hop) protein is Branched-chain amino acid aminotransferase 2, chloroplastic.